The following is a 117-amino-acid chain: Immunoglobulin kappa variable 1-27 (117 aa).

Residues 1–22 (MDMRVPAQLLGLLLLWLPDTRC) form the signal peptide. The tract at residues 23 to 45 (DIQMTQSPSSLSASVGDRVTITC) is framework-1. In terms of domain architecture, Ig-like spans 23–117 (DIQMTQSPSS…YYCQKYNSAP (95 aa)). The cysteines at positions 45 and 110 are disulfide-linked. A complementarity-determining-1 region spans residues 46 to 56 (RASQGISNYLA). The segment at 57–71 (WYQQKPGKVPKLLIY) is framework-2. The segment at 72 to 78 (AASTLQS) is complementarity-determining-2. The tract at residues 79–110 (GVPSRFSGSGSGTDFTLTISSLQPEDVATYYC) is framework-3. A complementarity-determining-3 region spans residues 111-117 (QKYNSAP).

In terms of assembly, immunoglobulins are composed of two identical heavy chains and two identical light chains; disulfide-linked.

The protein resides in the secreted. It localises to the cell membrane. V region of the variable domain of immunoglobulin light chains that participates in the antigen recognition. Immunoglobulins, also known as antibodies, are membrane-bound or secreted glycoproteins produced by B lymphocytes. In the recognition phase of humoral immunity, the membrane-bound immunoglobulins serve as receptors which, upon binding of a specific antigen, trigger the clonal expansion and differentiation of B lymphocytes into immunoglobulins-secreting plasma cells. Secreted immunoglobulins mediate the effector phase of humoral immunity, which results in the elimination of bound antigens. The antigen binding site is formed by the variable domain of one heavy chain, together with that of its associated light chain. Thus, each immunoglobulin has two antigen binding sites with remarkable affinity for a particular antigen. The variable domains are assembled by a process called V-(D)-J rearrangement and can then be subjected to somatic hypermutations which, after exposure to antigen and selection, allow affinity maturation for a particular antigen. In Homo sapiens (Human), this protein is Immunoglobulin kappa variable 1-27.